Consider the following 372-residue polypeptide: 4-hydroxy-3-methylbut-2-en-1-yl diphosphate synthase (flavodoxin) (372 aa).

[4Fe-4S] cluster-binding residues include cysteine 270, cysteine 273, cysteine 305, and glutamate 312.

This sequence belongs to the IspG family. It depends on [4Fe-4S] cluster as a cofactor.

The enzyme catalyses (2E)-4-hydroxy-3-methylbut-2-enyl diphosphate + oxidized [flavodoxin] + H2O + 2 H(+) = 2-C-methyl-D-erythritol 2,4-cyclic diphosphate + reduced [flavodoxin]. Its pathway is isoprenoid biosynthesis; isopentenyl diphosphate biosynthesis via DXP pathway; isopentenyl diphosphate from 1-deoxy-D-xylulose 5-phosphate: step 5/6. Converts 2C-methyl-D-erythritol 2,4-cyclodiphosphate (ME-2,4cPP) into 1-hydroxy-2-methyl-2-(E)-butenyl 4-diphosphate. The chain is 4-hydroxy-3-methylbut-2-en-1-yl diphosphate synthase (flavodoxin) from Salmonella paratyphi B (strain ATCC BAA-1250 / SPB7).